The sequence spans 368 residues: Methylthioribose-1-phosphate isomerase (368 aa).

Residues 54 to 56 (RGA), R91, and Q204 each bind substrate. D245 (proton donor) is an active-site residue. A substrate-binding site is contributed by 255-256 (NK).

It belongs to the eIF-2B alpha/beta/delta subunits family. MtnA subfamily.

The catalysed reaction is 5-(methylsulfanyl)-alpha-D-ribose 1-phosphate = 5-(methylsulfanyl)-D-ribulose 1-phosphate. It participates in amino-acid biosynthesis; L-methionine biosynthesis via salvage pathway; L-methionine from S-methyl-5-thio-alpha-D-ribose 1-phosphate: step 1/6. In terms of biological role, catalyzes the interconversion of methylthioribose-1-phosphate (MTR-1-P) into methylthioribulose-1-phosphate (MTRu-1-P). In Gluconobacter oxydans (strain 621H) (Gluconobacter suboxydans), this protein is Methylthioribose-1-phosphate isomerase.